The chain runs to 37 residues: Large ribosomal subunit protein bL36 (37 aa).

Belongs to the bacterial ribosomal protein bL36 family.

This Halalkalibacterium halodurans (strain ATCC BAA-125 / DSM 18197 / FERM 7344 / JCM 9153 / C-125) (Bacillus halodurans) protein is Large ribosomal subunit protein bL36.